The following is a 429-amino-acid chain: Formate-dependent phosphoribosylglycinamide formyltransferase (429 aa).

Residues 26–27 (EL) and Glu-86 each bind N(1)-(5-phospho-beta-D-ribosyl)glycinamide. ATP-binding positions include Arg-118, Lys-159, 199 to 202 (EEHI), and Glu-207. An ATP-grasp domain is found at 123 to 319 (ETLVKEAKVP…EFGLHLRAVL (197 aa)). The Mg(2+) site is built by Glu-276 and Glu-288. N(1)-(5-phospho-beta-D-ribosyl)glycinamide is bound by residues Asp-295, Lys-375, and 382–383 (RR).

The protein belongs to the PurK/PurT family. As to quaternary structure, homodimer.

It catalyses the reaction N(1)-(5-phospho-beta-D-ribosyl)glycinamide + formate + ATP = N(2)-formyl-N(1)-(5-phospho-beta-D-ribosyl)glycinamide + ADP + phosphate + H(+). It functions in the pathway purine metabolism; IMP biosynthesis via de novo pathway; N(2)-formyl-N(1)-(5-phospho-D-ribosyl)glycinamide from N(1)-(5-phospho-D-ribosyl)glycinamide (formate route): step 1/1. Involved in the de novo purine biosynthesis. Catalyzes the transfer of formate to 5-phospho-ribosyl-glycinamide (GAR), producing 5-phospho-ribosyl-N-formylglycinamide (FGAR). Formate is provided by PurU via hydrolysis of 10-formyl-tetrahydrofolate. The protein is Formate-dependent phosphoribosylglycinamide formyltransferase of Pyrococcus abyssi (strain GE5 / Orsay).